The following is a 182-amino-acid chain: UPF0397 protein VS_II0189 (182 aa).

The next 5 helical transmembrane spans lie at 8–28 (VVVI…MFGV), 41–61 (AVLA…VGFI), 72–92 (WGVW…IGLF), 110–130 (FALF…SSAF), and 146–166 (QLSI…FLIL).

This sequence belongs to the UPF0397 family.

It is found in the cell membrane. The protein is UPF0397 protein VS_II0189 of Vibrio atlanticus (strain LGP32) (Vibrio splendidus (strain Mel32)).